Here is a 380-residue protein sequence, read N- to C-terminus: Cobalt-precorrin-5B C(1)-methyltransferase (380 aa).

Belongs to the CbiD family.

The catalysed reaction is Co-precorrin-5B + S-adenosyl-L-methionine = Co-precorrin-6A + S-adenosyl-L-homocysteine. It functions in the pathway cofactor biosynthesis; adenosylcobalamin biosynthesis; cob(II)yrinate a,c-diamide from sirohydrochlorin (anaerobic route): step 6/10. Catalyzes the methylation of C-1 in cobalt-precorrin-5B to form cobalt-precorrin-6A. The chain is Cobalt-precorrin-5B C(1)-methyltransferase from Methanosphaera stadtmanae (strain ATCC 43021 / DSM 3091 / JCM 11832 / MCB-3).